The sequence spans 271 residues: Fatty acid elongase A (271 aa).

7 consecutive transmembrane segments (helical) span residues 35–55 (ILFP…LQIF), 68–88 (AMFH…GIVI), 102–122 (IICK…FYLS), 139–159 (SLLF…WANL), 165–185 (CQWV…FYYF), 198–220 (HITT…WHFY), and 237–257 (TSAF…QFFV).

This sequence belongs to the ELO family.

The protein resides in the membrane. The enzyme catalyses a very-long-chain acyl-CoA + malonyl-CoA + H(+) = a very-long-chain 3-oxoacyl-CoA + CO2 + CoA. Fatty acid elongase with strict substrate specificity for monounsaturated fatty acids, in particular 16:1 (delta-9) to produce the unusual 18:1 (delta-11) fatty acid. The chain is Fatty acid elongase A (eloA) from Dictyostelium discoideum (Social amoeba).